The following is a 180-amino-acid chain: Large ribosomal subunit protein uL6 (180 aa).

Belongs to the universal ribosomal protein uL6 family. Part of the 50S ribosomal subunit.

In terms of biological role, this protein binds to the 23S rRNA, and is important in its secondary structure. It is located near the subunit interface in the base of the L7/L12 stalk, and near the tRNA binding site of the peptidyltransferase center. In Prosthecochloris aestuarii (strain DSM 271 / SK 413), this protein is Large ribosomal subunit protein uL6.